Reading from the N-terminus, the 555-residue chain is Formate--tetrahydrofolate ligase (555 aa).

Position 65-72 (65-72 (TPAGEGKT)) interacts with ATP.

Belongs to the formate--tetrahydrofolate ligase family.

The catalysed reaction is (6S)-5,6,7,8-tetrahydrofolate + formate + ATP = (6R)-10-formyltetrahydrofolate + ADP + phosphate. The protein operates within one-carbon metabolism; tetrahydrofolate interconversion. This Thermoanaerobacter pseudethanolicus (strain ATCC 33223 / 39E) (Clostridium thermohydrosulfuricum) protein is Formate--tetrahydrofolate ligase.